Consider the following 1101-residue polypeptide: ATP-dependent DNA helicase mph1 (1101 aa).

Disordered regions lie at residues 22–59 (PGTS…SPDR), 95–138 (LTQP…QYHD), 154–231 (FEEE…TNRP), and 250–270 (SSQR…PTHH). Polar residues predominate over residues 24 to 48 (TSDTVESVQTNNRPAKQSDISISQG). Positions 170 to 190 (TPARTAAAPCAAPKGTAADVP) are enriched in low complexity. Residues 191-202 (FDLDDIPDDAFD) show a composition bias toward acidic residues. Over residues 209–228 (PPRSTSQATRGPPVQSQFRT) the composition is skewed to polar residues. In terms of domain architecture, Helicase ATP-binding spans 296-464 (IAQRGLFHNL…AIIDDLGIAK (169 aa)). 309–316 (LPTGLGKT) contacts ATP. Positions 412–415 (DEAH) match the DEAH box motif. The Helicase C-terminal domain occupies 634 to 808 (YLKQVVLNHF…GTRFTFHDDK (175 aa)). Disordered regions lie at residues 824-890 (RQID…PTPE) and 991-1067 (SRDP…QDAF). Over residues 842–854 (RRARPPKRPPKKF) the composition is skewed to basic residues.

It belongs to the DEAD box helicase family. DEAH subfamily. FANCM sub-subfamily. As to quaternary structure, interacts with the MHF histone-fold complex to form the FANCM-MHF complex.

The protein localises to the nucleus. The enzyme catalyses ATP + H2O = ADP + phosphate + H(+). Functionally, ATP-dependent DNA helicase involved in DNA damage repair by homologous recombination and in genome maintenance. Capable of unwinding D-loops. Plays a role in limiting crossover recombinants during mitotic DNA double-strand break (DSB) repair. Component of a FANCM-MHF complex which promotes gene conversion at blocked replication forks, probably by reversal of the stalled fork. This Aspergillus fumigatus (strain CBS 144.89 / FGSC A1163 / CEA10) (Neosartorya fumigata) protein is ATP-dependent DNA helicase mph1.